The primary structure comprises 216 residues: Protein Syd (216 aa).

Belongs to the Syd family.

It is found in the cell inner membrane. Functionally, interacts with the SecY protein in vivo. May bind preferentially to an uncomplexed state of SecY, thus functioning either as a chelating agent for excess SecY in the cell or as a regulatory factor that negatively controls the translocase function. The sequence is that of Protein Syd from Shewanella frigidimarina (strain NCIMB 400).